The chain runs to 261 residues: WW domain-binding protein 2 (261 aa).

The 84-residue stretch at 1-84 folds into the GRAM domain; the sequence is MALNKNHSEG…YLMKDCEIKQ (84 aa). Y192 is modified (phosphotyrosine; by YES and SRC). Positions 196 to 200 match the PPxY motif 1 motif; the sequence is PPPPY. Pro residues predominate over residues 196-209; sequence PPPPYPGPMEPPVS. The tract at residues 196–261 is disordered; the sequence is PPPPYPGPME…YYPPEDKKTQ (66 aa). Residues 218–230 are compositionally biased toward low complexity; it reads AAEAKAAEAAASA. Y231 is modified (phosphotyrosine; by YES and SRC). The segment covering 245–254 has biased composition (pro residues); it reads SQPPPPPYYP. The short motif at 248–252 is the PPxY motif 2 element; it reads PPPPY.

As to quaternary structure, binds to the WW domain of YAP1, WWP1 and WWP2. Interacts with NEDD4. Interacts with ESR1 and UBE3A. In terms of processing, phosphorylated in repsonse to EGF as well as estrogen and progesterone hormones. Tyr-192 and Tyr-231 are phosphorylated by YES and SRC inducing nuclear translocation. Ubiquitous.

Its subcellular location is the cytoplasm. It localises to the nucleus. In terms of biological role, acts as a transcriptional coactivator of estrogen and progesterone receptors (ESR1 and PGR) upon hormone activation. In presence of estrogen, binds to ESR1-responsive promoters. Synergizes with YAP1 to enhance PGR activity. Modulates expression of post-synaptic scaffolding proteins via regulation of ESR1, ESR2 and PGR. In Homo sapiens (Human), this protein is WW domain-binding protein 2.